Consider the following 520-residue polypeptide: Ribonuclease Y (520 aa).

A helical membrane pass occupies residues 1–21 (MDIITIIIAVIAGIGGGFGIS). The region spanning 210–276 (CVSVFNIESD…RLALHKLVTD (67 aa)) is the KH domain. The HD domain occupies 336–429 (LLQHSREVSK…VQVCDAISGA (94 aa)).

Belongs to the RNase Y family.

The protein resides in the cell membrane. Its function is as follows. Endoribonuclease that initiates mRNA decay. The polypeptide is Ribonuclease Y (Flavobacterium psychrophilum (strain ATCC 49511 / DSM 21280 / CIP 103535 / JIP02/86)).